The following is a 564-amino-acid chain: Malignant brain tumor repeat protein 1 (564 aa).

MBT repeat units lie at residues 64–176 (FTWS…MKWL), 205–327 (RPTE…TKAT), 331–442 (LEHS…LDRL), and 450–549 (FKWE…LRHP).

In terms of assembly, interacts with histone H3 that is trimethylated at 'Lys-9' (H3K9me3).

This chain is Malignant brain tumor repeat protein 1 (mbtr-1), found in Caenorhabditis elegans.